Consider the following 509-residue polypeptide: ATP synthase subunit alpha (509 aa).

Residue Gly169–Thr176 participates in ATP binding.

Belongs to the ATPase alpha/beta chains family. In terms of assembly, F-type ATPases have 2 components, CF(1) - the catalytic core - and CF(0) - the membrane proton channel. CF(1) has five subunits: alpha(3), beta(3), gamma(1), delta(1), epsilon(1). CF(0) has four main subunits: a(1), b(1), b'(1) and c(9-12).

The protein localises to the cellular chromatophore membrane. The catalysed reaction is ATP + H2O + 4 H(+)(in) = ADP + phosphate + 5 H(+)(out). Produces ATP from ADP in the presence of a proton gradient across the membrane. The alpha chain is a regulatory subunit. This chain is ATP synthase subunit alpha, found in Rhodobacter capsulatus (Rhodopseudomonas capsulata).